The chain runs to 810 residues: DNA ligase (810 aa).

Residues 46–50 (DAEYD), 95–96 (SL), and E129 each bind NAD(+). The N6-AMP-lysine intermediate role is filled by K131. Residues R152, E189, K305, and K329 each contribute to the NAD(+) site. Positions 434, 437, 458, and 464 each coordinate Zn(2+). The segment at 528 to 548 (ERRAESGTAEPPKKAAKKKGD) is disordered. One can recognise a BRCT domain in the interval 731-810 (AAASTFAGKT…DDWLAMVAQG (80 aa)).

It belongs to the NAD-dependent DNA ligase family. LigA subfamily. It depends on Mg(2+) as a cofactor. Mn(2+) serves as cofactor.

It catalyses the reaction NAD(+) + (deoxyribonucleotide)n-3'-hydroxyl + 5'-phospho-(deoxyribonucleotide)m = (deoxyribonucleotide)n+m + AMP + beta-nicotinamide D-nucleotide.. DNA ligase that catalyzes the formation of phosphodiester linkages between 5'-phosphoryl and 3'-hydroxyl groups in double-stranded DNA using NAD as a coenzyme and as the energy source for the reaction. It is essential for DNA replication and repair of damaged DNA. The polypeptide is DNA ligase (Methylobacterium radiotolerans (strain ATCC 27329 / DSM 1819 / JCM 2831 / NBRC 15690 / NCIMB 10815 / 0-1)).